A 766-amino-acid chain; its full sequence is Tetratricopeptide repeat protein 14 (766 aa).

The interval 35–55 (LGTAAEPARGAAPPPGAGRKE) is disordered. The 83-residue stretch at 125 to 207 (GDIVIGRISS…YHEKLAVSLY (83 aa)) folds into the S1 motif domain. TPR repeat units lie at residues 209–242 (SSLP…NSNS), 306–339 (ALKC…DKQN), 341–373 (EALV…CPTH), and 381–414 (CQTL…DETF). A disordered region spans residues 463 to 743 (EEKRLKKKRR…PDSRVKKNLP (281 aa)). Over residues 475 to 496 (SSSSSVSSADESVSSSSSSSSS) the composition is skewed to low complexity. Residues 497–506 (SHKRHKKSKR) show a composition bias toward basic residues. Polar residues predominate over residues 539–550 (PTNTSASFLNQK). Positions 551–562 (QEVEKLLEKQDR) are enriched in basic and acidic residues. A compositionally biased stretch (polar residues) spans 594–605 (FYNSYKTQAGSS). 2 stretches are compositionally biased toward basic and acidic residues: residues 606-616 (KTEKPYKSERH) and 629-657 (NSED…RRWE). Polar residues predominate over residues 661-673 (VKYSTSPASSDYS). At serine 666 the chain carries Phosphoserine. Residues 707–738 (RVYEKEDSCGEGNRNEAPEEMLNSKEQPDSRV) show a composition bias toward basic and acidic residues.

This sequence belongs to the TTC14 family.

The protein is Tetratricopeptide repeat protein 14 of Mus musculus (Mouse).